The sequence spans 159 residues: Phosphopantetheine adenylyltransferase (159 aa).

Histidine 16 provides a ligand contact to ATP. The substrate site is built by lysine 40, methionine 72, and arginine 86. ATP is bound by residues 87 to 89 (GLR), glutamate 97, and 122 to 128 (YQYLSAS).

Belongs to the bacterial CoaD family. Homohexamer. Requires Mg(2+) as cofactor.

The protein resides in the cytoplasm. It carries out the reaction (R)-4'-phosphopantetheine + ATP + H(+) = 3'-dephospho-CoA + diphosphate. It functions in the pathway cofactor biosynthesis; coenzyme A biosynthesis; CoA from (R)-pantothenate: step 4/5. Functionally, reversibly transfers an adenylyl group from ATP to 4'-phosphopantetheine, yielding dephospho-CoA (dPCoA) and pyrophosphate. This is Phosphopantetheine adenylyltransferase from Dehalococcoides mccartyi (strain ATCC BAA-2266 / KCTC 15142 / 195) (Dehalococcoides ethenogenes (strain 195)).